The following is a 581-amino-acid chain: Jasmonoyl--L-amino acid synthetase GH3.5 (581 aa).

Ser-92 serves as a coordination point for ATP. Ser-95 provides a ligand contact to jasmonate. ATP contacts are provided by residues Thr-115, Asn-161, and 324 to 329 (GASEGW). Position 159-163 (159-163 (TTNLY)) interacts with an L-alpha-amino acid. Jasmonate is bound by residues 321-324 (ADYG) and Ser-326. An an L-alpha-amino acid-binding site is contributed by 534–538 (EILDH). Lys-561 contributes to the ATP binding site.

Belongs to the IAA-amido conjugating enzyme family. As to expression, expressed in green shoots, roots and flowers.

It catalyses the reaction a jasmonate + an L-alpha-amino acid + ATP = a jasmonyl-L-amino acid + AMP + diphosphate + H(+). In terms of biological role, catalyzes the synthesis of jasmonate-amino acid conjugates by adenylation. Catalyzes the conjugation of jasmonate (JA) to Ile when expressed in a heterologous system (E.coli). Catalyzes in vitro the conjugation of jasmonate (JA) to Ile, Phe, Cys, Leu, Met, Ala, Val and Trp. Involved in the production of JA-Ile in response to infection by the rice blast fungus Magnaporthe oryzae. Required for the accumulation of the flavonoid phytoalexin sakuranetin in response to infection by the rice blast fungus. Involved in herbivory-induced JA-Ile accumulation. Involved in the production of JA-Ile in response to wounding. Required for modulation of light and JA signaling in photomorphogenesis. Required for normal seed development. Required for optimal flower opening and closing and anther dehiscence. May catalyze the synthesis of indole-3-acetic acid (IAA)-amino acid conjugates, providing a mechanism for the plant to cope with the presence of excess auxin. The polypeptide is Jasmonoyl--L-amino acid synthetase GH3.5 (Oryza sativa subsp. japonica (Rice)).